The primary structure comprises 156 residues: Ribosomal RNA large subunit methyltransferase H (156 aa).

S-adenosyl-L-methionine contacts are provided by residues Leu-73, Gly-104, and 123–128 (LSSLTL).

It belongs to the RNA methyltransferase RlmH family. In terms of assembly, homodimer.

It is found in the cytoplasm. The enzyme catalyses pseudouridine(1915) in 23S rRNA + S-adenosyl-L-methionine = N(3)-methylpseudouridine(1915) in 23S rRNA + S-adenosyl-L-homocysteine + H(+). Functionally, specifically methylates the pseudouridine at position 1915 (m3Psi1915) in 23S rRNA. The sequence is that of Ribosomal RNA large subunit methyltransferase H from Neisseria gonorrhoeae (strain ATCC 700825 / FA 1090).